A 67-amino-acid polypeptide reads, in one-letter code: uncharacterized protein (67 aa).

2 consecutive transmembrane segments (helical) span residues 6 to 26 and 38 to 58; these read GQLW…CVLM and NNII…IIII.

It is found in the membrane. This is an uncharacterized protein from Dictyostelium discoideum (Social amoeba).